The sequence spans 117 residues: Large ribosomal subunit protein uL18 (117 aa).

Belongs to the universal ribosomal protein uL18 family. As to quaternary structure, part of the 50S ribosomal subunit; part of the 5S rRNA/L5/L18/L25 subcomplex. Contacts the 5S and 23S rRNAs.

Functionally, this is one of the proteins that bind and probably mediate the attachment of the 5S RNA into the large ribosomal subunit, where it forms part of the central protuberance. The chain is Large ribosomal subunit protein uL18 from Buchnera aphidicola subsp. Acyrthosiphon kondoi (Acyrthosiphon kondoi symbiotic bacterium).